A 166-amino-acid polypeptide reads, in one-letter code: PTS system glucose-specific EIIA component (166 aa).

Residues 34-138 (DPVFAQKMMG…SVISPIIITN (105 aa)) form the PTS EIIA type-1 domain. Residues His71 and His86 each contribute to the Zn(2+) site. His86 functions as the Tele-phosphohistidine intermediate; for EIIA activity in the catalytic mechanism. The residue at position 86 (His86) is a Phosphohistidine; by HPr.

As to quaternary structure, heterodimer with glycerol kinase (glpk). Zn(2+) serves as cofactor.

Its subcellular location is the cytoplasm. Functionally, the phosphoenolpyruvate-dependent sugar phosphotransferase system (sugar PTS), a major carbohydrate active transport system, catalyzes the phosphorylation of incoming sugar substrates concomitantly with their translocation across the cell membrane. The enzyme II complex composed of PtsG and Crr is involved in glucose transport. The polypeptide is PTS system glucose-specific EIIA component (crr) (Staphylococcus aureus (strain MSSA476)).